Consider the following 367-residue polypeptide: Carbamoyl-phosphate synthase (367 aa).

The ATP-grasp domain occupies 111 to 296; it reads KEFYNEIGVP…SLCELVNMAA (186 aa). Residue 137–186 participates in ATP binding; it reads KMEFPVVLKQGQGQGGKDIKVAESLDDVKEYFEEFDHALCEKFIEGSEIS. Mg(2+) contacts are provided by aspartate 253, glutamate 267, and asparagine 269. Residues aspartate 253, glutamate 267, and asparagine 269 each coordinate Mn(2+).

This sequence belongs to the small carbamoyl-phosphate synthase family. In terms of assembly, forms homodimers and homotetramers (dimers of dimers). It depends on Mg(2+) as a cofactor. Mn(2+) is required as a cofactor.

It catalyses the reaction hydrogencarbonate + NH4(+) + 2 ATP = carbamoyl phosphate + 2 ADP + phosphate + 2 H(+). Catalyzes the synthesis of carbamoyl phosphate from ATP, ammonium and bicarbonate. Proceeds via a three-step mechanism, i.e. the phosphorylation of hydrogencarbonate to carboxyphosphate, a nucleophilic attack of ammonia on carboxyphosphate yielding carbamate, and the phosphorylation of carbamate forming carbamoyl phosphate. In M.smithii, the predominant archaeon in the human gut, one function of this enzyme may be to sequester ammonia, a scarce nutrient in the intestine which is the major source of nitrogen in M.smithii for the biosynthesis of nucleotides, amino acids, and many other metabolites. This is Carbamoyl-phosphate synthase from Methanobrevibacter smithii (strain ATCC 35061 / DSM 861 / OCM 144 / PS).